We begin with the raw amino-acid sequence, 704 residues long: Elongation factor G (704 aa).

Residues 8 to 290 (EKYRNIGICA…GVVRYLPAPN (283 aa)) form the tr-type G domain. GTP contacts are provided by residues 17–24 (AHVDAGKT), 88–92 (DTPGH), and 142–145 (NKMD).

This sequence belongs to the TRAFAC class translation factor GTPase superfamily. Classic translation factor GTPase family. EF-G/EF-2 subfamily.

It is found in the cytoplasm. In terms of biological role, catalyzes the GTP-dependent ribosomal translocation step during translation elongation. During this step, the ribosome changes from the pre-translocational (PRE) to the post-translocational (POST) state as the newly formed A-site-bound peptidyl-tRNA and P-site-bound deacylated tRNA move to the P and E sites, respectively. Catalyzes the coordinated movement of the two tRNA molecules, the mRNA and conformational changes in the ribosome. The protein is Elongation factor G of Francisella tularensis subsp. tularensis (strain FSC 198).